Reading from the N-terminus, the 281-residue chain is Probable endonuclease 4 (281 aa).

Positions 68, 108, 145, 179, 182, 216, 229, 231, and 261 each coordinate Zn(2+).

It belongs to the AP endonuclease 2 family. The cofactor is Zn(2+).

It carries out the reaction Endonucleolytic cleavage to 5'-phosphooligonucleotide end-products.. Its function is as follows. Endonuclease IV plays a role in DNA repair. It cleaves phosphodiester bonds at apurinic or apyrimidinic (AP) sites, generating a 3'-hydroxyl group and a 5'-terminal sugar phosphate. In Trichlorobacter lovleyi (strain ATCC BAA-1151 / DSM 17278 / SZ) (Geobacter lovleyi), this protein is Probable endonuclease 4.